The chain runs to 328 residues: MSKKPVRVAVTGAAGQIGYALLFRIASGEMLGKDQPVILQLLEIPDEKAQKALKGVMMELDDCAFPLLAGMEAHGDPMTAFKDADYALLVGSRPRGPGMERAELLAVNGAIFTAQGKALNAVASRNVKVLVVGNPANTNAYIAMKSAPDLPRKNFTAMLRLDHNRAASQIAAKTGKAVADIEKLVVWGNHSPTMYADYRFATIKGESVAKMINDQEWNANTFLPTVGKRGAAIIEARGLSSAASAANAAIDHMRDWALGTNGKWVTMGIPSDGQYGIPKDTMFGFPVTCENGEYKLVEGLEIDAFSQERINKTLEELQGEQAGVAHLI.

12 to 18 (GAAGQIG) contacts NAD(+). The substrate site is built by R95 and R101. NAD(+)-binding positions include N108, Q115, and 132-134 (VGN). Substrate is bound by residues N134 and R165. H190 (proton acceptor) is an active-site residue.

The protein belongs to the LDH/MDH superfamily. MDH type 2 family.

It catalyses the reaction (S)-malate + NAD(+) = oxaloacetate + NADH + H(+). Catalyzes the reversible oxidation of malate to oxaloacetate. The chain is Malate dehydrogenase from Variovorax paradoxus (strain S110).